The primary structure comprises 236 residues: Leucyl/phenylalanyl-tRNA--protein transferase (236 aa).

The protein belongs to the L/F-transferase family.

It is found in the cytoplasm. The catalysed reaction is N-terminal L-lysyl-[protein] + L-leucyl-tRNA(Leu) = N-terminal L-leucyl-L-lysyl-[protein] + tRNA(Leu) + H(+). It catalyses the reaction N-terminal L-arginyl-[protein] + L-leucyl-tRNA(Leu) = N-terminal L-leucyl-L-arginyl-[protein] + tRNA(Leu) + H(+). The enzyme catalyses L-phenylalanyl-tRNA(Phe) + an N-terminal L-alpha-aminoacyl-[protein] = an N-terminal L-phenylalanyl-L-alpha-aminoacyl-[protein] + tRNA(Phe). Functionally, functions in the N-end rule pathway of protein degradation where it conjugates Leu, Phe and, less efficiently, Met from aminoacyl-tRNAs to the N-termini of proteins containing an N-terminal arginine or lysine. This is Leucyl/phenylalanyl-tRNA--protein transferase from Shewanella loihica (strain ATCC BAA-1088 / PV-4).